Reading from the N-terminus, the 429-residue chain is Adenylosuccinate synthetase (429 aa).

GTP is bound by residues Gly-12–Lys-18 and Gly-40–Thr-42. Catalysis depends on Asp-13, which acts as the Proton acceptor. Residues Asp-13 and Gly-40 each contribute to the Mg(2+) site. IMP-binding positions include Asp-13–Lys-16, Asn-38–His-41, Thr-129, Arg-143, Gln-223, Thr-238, and Arg-302. His-41 functions as the Proton donor in the catalytic mechanism. Thr-298–Arg-304 contacts substrate. GTP contacts are provided by residues Arg-304, Lys-330–Asp-332, and Ser-412–Ser-414.

The protein belongs to the adenylosuccinate synthetase family. As to quaternary structure, homodimer. Mg(2+) is required as a cofactor.

It is found in the cytoplasm. The catalysed reaction is IMP + L-aspartate + GTP = N(6)-(1,2-dicarboxyethyl)-AMP + GDP + phosphate + 2 H(+). Its pathway is purine metabolism; AMP biosynthesis via de novo pathway; AMP from IMP: step 1/2. Its function is as follows. Plays an important role in the de novo pathway of purine nucleotide biosynthesis. Catalyzes the first committed step in the biosynthesis of AMP from IMP. The protein is Adenylosuccinate synthetase of Rhodospirillum rubrum (strain ATCC 11170 / ATH 1.1.1 / DSM 467 / LMG 4362 / NCIMB 8255 / S1).